The primary structure comprises 275 residues: Glycerol-3-phosphate dehydrogenase [NAD(P)+] (275 aa).

The NADPH site is built by tryptophan 12, arginine 32, and lysine 105. Residues lysine 105, glycine 133, and threonine 135 each coordinate sn-glycerol 3-phosphate. Alanine 137 is an NADPH binding site. Lysine 188, aspartate 241, serine 251, arginine 252, and asparagine 253 together coordinate sn-glycerol 3-phosphate. Lysine 188 functions as the Proton acceptor in the catalytic mechanism. Arginine 252 is a binding site for NADPH.

Belongs to the NAD-dependent glycerol-3-phosphate dehydrogenase family.

The protein resides in the cytoplasm. The enzyme catalyses sn-glycerol 3-phosphate + NAD(+) = dihydroxyacetone phosphate + NADH + H(+). It carries out the reaction sn-glycerol 3-phosphate + NADP(+) = dihydroxyacetone phosphate + NADPH + H(+). It participates in membrane lipid metabolism; glycerophospholipid metabolism. Catalyzes the reduction of the glycolytic intermediate dihydroxyacetone phosphate (DHAP) to sn-glycerol 3-phosphate (G3P), the key precursor for phospholipid synthesis. This chain is Glycerol-3-phosphate dehydrogenase [NAD(P)+], found in Paramagnetospirillum magneticum (strain ATCC 700264 / AMB-1) (Magnetospirillum magneticum).